We begin with the raw amino-acid sequence, 376 residues long: Heat stress transcription factor A-2a (376 aa).

Residues 137-168 (LKTIKRRRPPPSSPPSSSSSSSSSQHQQQPAA) are disordered. Residues 151-160 (PSSSSSSSSS) are compositionally biased toward low complexity. Residues 182-229 (VNRLQRDKSVLIAEVVKLRQEQQTTRAQMQAMEERISAAEQKQQQMTV) are a coiled coil. Positions 185 to 235 (LQRDKSVLIAEVVKLRQEQQTTRAQMQAMEERISAAEQKQQQMTVFLARAM) are hydrophobic repeat HR-A/B. The Nuclear localization signal motif lies at 265–269 (KKRRR). Disordered stretches follow at residues 296 to 319 (VAEP…DTES) and 332 to 362 (KQRE…DDDD). Positions 307–316 (GDGGGGGGGD) are enriched in gly residues. Positions 318 to 325 (ESFWMQLL) match the AHA motif. A compositionally biased stretch (acidic residues) spans 352–362 (VDNDEEDDDDD). Residues 366-373 (LVQSIYHL) carry the Nuclear export signal motif.

Belongs to the HSF family. Class A subfamily. In terms of assembly, homotrimer. Exhibits temperature-dependent phosphorylation.

It localises to the cytoplasm. The protein resides in the nucleus. Transcriptional regulator that specifically binds DNA of heat shock promoter elements (HSE). This chain is Heat stress transcription factor A-2a (HSFA2A), found in Oryza sativa subsp. japonica (Rice).